Here is a 431-residue protein sequence, read N- to C-terminus: Adenylosuccinate synthetase (431 aa).

GTP-binding positions include 13–19 and 41–43; these read GDEGKGK and GHT. The Proton acceptor role is filled by Asp-14. 2 residues coordinate Mg(2+): Asp-14 and Gly-41. IMP-binding positions include 14–17, 39–42, Thr-130, Arg-144, Gln-225, Thr-240, and Arg-304; these read DEGK and NAGH. Residue His-42 is the Proton donor of the active site. 300-306 contacts substrate; the sequence is ATTGRKR. Residues Arg-306, 332 to 334, and 415 to 417 contribute to the GTP site; these read KLD and STG.

Belongs to the adenylosuccinate synthetase family. As to quaternary structure, homodimer. It depends on Mg(2+) as a cofactor.

It localises to the cytoplasm. The catalysed reaction is IMP + L-aspartate + GTP = N(6)-(1,2-dicarboxyethyl)-AMP + GDP + phosphate + 2 H(+). Its pathway is purine metabolism; AMP biosynthesis via de novo pathway; AMP from IMP: step 1/2. Functionally, plays an important role in the de novo pathway of purine nucleotide biosynthesis. Catalyzes the first committed step in the biosynthesis of AMP from IMP. The chain is Adenylosuccinate synthetase from Shewanella woodyi (strain ATCC 51908 / MS32).